The primary structure comprises 887 residues: MTSIINNTNSTVFDSTNNGNMAILEPVQPVSKGPKGITFSGQTFVVPETHDMVKTLFDPTVRKSNFELIILGCLFSNLLVFLIPNNQIRIYIFIALYIFWRLSYNFGIGWLLQNQSNHNLLVSWSQKYKLFEPGNTSFLAKSIQNEIKSQRGENYDIKSMPVEFNTWLIFRKFVDLILMSDFITFCCVVYCSAIKNNYQFFNNQSSWLVYSRIVFGTGLILFNLWVKVNAHNTIKDYAWYWGDFFFRQINNEELIFDGVFEMVPHPMYSVGYVGYYGFALIAKSYVVLAIAIFGHFLQMIFLHYIENPHIDKIYGPSKNEINLIKILKLKDLKNFDNLKPLVGLTNFNWMRASDIVNLVLSLTYGIIIPLFANSIKSLFILTVGMKLFESISINLLLTLQSYFKVVTKWSLSNDIPVEKSLSNWAVLYNSLINLTYSSLFGMNLGYFLQKSSSSSSSSSSSGLLFSDWFYLRIFLGLLLVYTQFWINFSIIDSIGYFGWFYGDFFIPKSQSSIKNITTAGVYRYLNNPEQIFGVCGVMGIFMIYPTVENFICVGLWVVNNFIRINFIEKSHMVKLYGEQEVNRDSGVTKTVKKHLLPEVIQRRMSNDEAYARTNGISNGRRKSSNNSHSNSVADSLDNFIRDLRNSSTKLSQQKLIELSQNLSFANSDYKLTIDGLMQSTEGELKYTTIGTPVTISWTSPEKNHSVRDWVGLYKIVQTSYSRNKTILSSAGRWTWCKEANGTFIFDREKLFWEEGVYEFRYHLDGKHEVAYISEPFEIKSVELDVPAIEEYANEFAENLKLEIFDKVINLTNINEAISPIANQSDNVIEVYKLISSMISKSTKINITYKIFLNHDLLSIKDVAIKLINIKHVLEELSFNITTDKKDI.

The Lumenal portion of the chain corresponds to 1 to 63; the sequence is MTSIINNTNS…KTLFDPTVRK (63 aa). Residues 64 to 84 traverse the membrane as a helical segment; that stretch reads SNFELIILGCLFSNLLVFLIP. At 85–91 the chain is on the cytoplasmic side; the sequence is NNQIRIY. A helical transmembrane segment spans residues 92–112; the sequence is IFIALYIFWRLSYNFGIGWLL. The Lumenal segment spans residues 113–173; that stretch reads QNQSNHNLLV…FNTWLIFRKF (61 aa). A helical transmembrane segment spans residues 174–194; the sequence is VDLILMSDFITFCCVVYCSAI. The Cytoplasmic portion of the chain corresponds to 195 to 205; that stretch reads KNNYQFFNNQS. A helical transmembrane segment spans residues 206 to 226; the sequence is SWLVYSRIVFGTGLILFNLWV. Over 227–261 the chain is Lumenal; sequence KVNAHNTIKDYAWYWGDFFFRQINNEELIFDGVFE. A helical membrane pass occupies residues 262 to 282; that stretch reads MVPHPMYSVGYVGYYGFALIA. Residues 283-284 lie on the Cytoplasmic side of the membrane; it reads KS. A helical transmembrane segment spans residues 285-305; that stretch reads YVVLAIAIFGHFLQMIFLHYI. The Lumenal segment spans residues 306 to 354; the sequence is ENPHIDKIYGPSKNEINLIKILKLKDLKNFDNLKPLVGLTNFNWMRASD. Residues 355-375 traverse the membrane as a helical segment; it reads IVNLVLSLTYGIIIPLFANSI. Over 376–377 the chain is Cytoplasmic; the sequence is KS. The chain crosses the membrane as a helical span at residues 378-398; the sequence is LFILTVGMKLFESISINLLLT. At 399–423 the chain is on the lumenal side; it reads LQSYFKVVTKWSLSNDIPVEKSLSN. A helical transmembrane segment spans residues 424–444; that stretch reads WAVLYNSLINLTYSSLFGMNL. The Cytoplasmic portion of the chain corresponds to 445-472; sequence GYFLQKSSSSSSSSSSSGLLFSDWFYLR. A helical transmembrane segment spans residues 473–493; sequence IFLGLLLVYTQFWINFSIIDS. Residues 494 to 530 lie on the Lumenal side of the membrane; that stretch reads IGYFGWFYGDFFIPKSQSSIKNITTAGVYRYLNNPEQ. The chain crosses the membrane as a helical span at residues 531-551; sequence IFGVCGVMGIFMIYPTVENFI. Residues 552 to 887 lie on the Cytoplasmic side of the membrane; it reads CVGLWVVNNF…FNITTDKKDI (336 aa). Residues 610 to 631 are disordered; sequence YARTNGISNGRRKSSNNSHSNS. Residues 614 to 631 are compositionally biased toward low complexity; the sequence is NGISNGRRKSSNNSHSNS.

It belongs to the class VI-like SAM-binding methyltransferase superfamily. CHO2 family.

It localises to the endoplasmic reticulum membrane. The enzyme catalyses a 1,2-diacyl-sn-glycero-3-phosphoethanolamine + S-adenosyl-L-methionine = a 1,2-diacyl-sn-glycero-3-phospho-N-methylethanolamine + S-adenosyl-L-homocysteine + H(+). The protein operates within phospholipid metabolism; phosphatidylcholine biosynthesis. Catalyzes the first step of the methylation pathway of phosphatidylcholine biosynthesis, the SAM-dependent methylation of phosphatidylethanolamine (PE) to phosphatidylmonomethylethanolamine (PMME). The protein is Phosphatidylethanolamine N-methyltransferase (CHO2) of Candida dubliniensis (strain CD36 / ATCC MYA-646 / CBS 7987 / NCPF 3949 / NRRL Y-17841) (Yeast).